Consider the following 375-residue polypeptide: Stomatin-2 (375 aa).

The segment at 1–75 (MKTQPSEESA…IPVPTGQPRG (75 aa)) is disordered. Residues 11 to 50 (SPAPVNPGNSGNSGNRRASSTRISFSDQLDGGDSGDSSSN) are compositionally biased toward low complexity. The chain crosses the membrane as a helical span at residues 120-140 (GLGFCGWFLMGLSWIMVISTF).

It belongs to the band 7/mec-2 family.

It is found in the membrane. Functionally, may be involved in cilia-related function. The sequence is that of Stomatin-2 (sto-2) from Caenorhabditis elegans.